The chain runs to 402 residues: UPF0261 protein BPP1817 (402 aa).

This sequence belongs to the UPF0261 family.

The polypeptide is UPF0261 protein BPP1817 (Bordetella parapertussis (strain 12822 / ATCC BAA-587 / NCTC 13253)).